The primary structure comprises 985 residues: Exocyst complex component 4 (985 aa).

Positions 36–70 (SETTEERQKEKQKIEAEFKRSDLRLNELVSRHDQQ) form a coiled coil. Phosphoserine is present on residues Ser-235, Ser-456, Ser-459, Ser-682, and Ser-686. Positions 434-480 (DKSSHVGTSNNSDAFKEHRRNASDASVDDNLAGQLGGSGKGSTSGLF) are disordered.

This sequence belongs to the SEC8 family. As to quaternary structure, the exocyst complex is composed of Sec3/Exoc1, Sec5/Exoc2, Sec6/Exoc3, Sec8/Exoc4, Sec10/Exoc5, Sec15/Exoc6, exo70/Exoc7 and Exo84/Exoc8. Abundant in the embryonic and larval glutamatergic neuromuscular junctions (NMJs), pre and postsynaptically.

Component of the exocyst complex involved in the docking of exocytic vesicles with fusion sites on the plasma membrane. Involved in regulation of synaptic microtubule formation, and also regulation of synaptic growth and glutamate receptor trafficking. Does not appear to be required for basal neurotransmission. The protein is Exocyst complex component 4 of Drosophila melanogaster (Fruit fly).